Here is a 283-residue protein sequence, read N- to C-terminus: Para-Rep C7 (283 aa).

Residues 3–96 (SIRATHWCFT…IAGPWEYGTW (94 aa)) form the CRESS-DNA virus Rep endonuclease domain. The short motif at 10 to 13 (CFTL) is the RCR-1 element. Glu-36 and His-42 together coordinate a divalent metal cation. Residues 42 to 44 (HLQ) carry the RCR-2 motif. The short motif at 51 to 71 (KHVTLKKMKELLPGAHLEMAK) is the Nuclear localization signal element. Tyr-79 (for DNA cleavage activity) is an active-site residue. An RCR-3 motif is present at residues 79-82 (YCQK). Glu-84 lines the a divalent metal cation pocket. The Nuclear localization signal motif lies at 96–102 (WISSGSH). 178–180 (GKS) contacts ATP.

The protein belongs to the nanoviridea/circoviridae replication-associated protein family. As to quaternary structure, homooligomer (Potential). Rep binds to repeated DNA motifs (iterons). The cofactor is Mg(2+). It depends on Mn(2+) as a cofactor.

Its subcellular location is the host nucleus. It catalyses the reaction ATP + H2O = ADP + phosphate + H(+). Its function is as follows. Initiates and terminates the replication only of its own subviral DNA molecule. The closed circular ssDNA genome is first converted to a superhelical dsDNA. Rep binds a specific hairpin at the genome origin of replication. Introduces an endonucleolytic nick within the intergenic region of the genome, thereby initiating the rolling circle replication (RCR). Following cleavage, binds covalently to the 5'-phosphate of DNA as a tyrosyl ester. The cleavage gives rise to a free 3'-OH that serves as a primer for the cellular DNA polymerase. The polymerase synthesizes the (+) strand DNA by rolling circle mechanism. After one round of replication, a Rep-catalyzed nucleotidyl transfer reaction releases a circular single-stranded virus genome, thereby terminating the replication. Displays origin-specific DNA cleavage, nucleotidyl transferase, ATPase and helicase activities. In Faba bean necrotic yellows C7 alphasatellite (FBNYC7A), this protein is Para-Rep C7 (C7).